Here is a 101-residue protein sequence, read N- to C-terminus: NADH-quinone oxidoreductase subunit K (101 aa).

Helical transmembrane passes span 4–24 (LSDY…GIFV), 29–49 (IITL…NFVA), and 61–81 (IFVF…LAIL).

This sequence belongs to the complex I subunit 4L family. As to quaternary structure, NDH-1 is composed of 14 different subunits. Subunits NuoA, H, J, K, L, M, N constitute the membrane sector of the complex.

It is found in the cell inner membrane. The enzyme catalyses a quinone + NADH + 5 H(+)(in) = a quinol + NAD(+) + 4 H(+)(out). Functionally, NDH-1 shuttles electrons from NADH, via FMN and iron-sulfur (Fe-S) centers, to quinones in the respiratory chain. The immediate electron acceptor for the enzyme in this species is believed to be ubiquinone. Couples the redox reaction to proton translocation (for every two electrons transferred, four hydrogen ions are translocated across the cytoplasmic membrane), and thus conserves the redox energy in a proton gradient. The protein is NADH-quinone oxidoreductase subunit K of Ruthia magnifica subsp. Calyptogena magnifica.